The primary structure comprises 215 residues: Chloramphenicol acetyltransferase (215 aa).

H189 acts as the Proton acceptor in catalysis.

This sequence belongs to the chloramphenicol acetyltransferase family. As to quaternary structure, homotrimer.

It catalyses the reaction chloramphenicol + acetyl-CoA = chloramphenicol 3-acetate + CoA. Its function is as follows. This enzyme is an effector of chloramphenicol resistance in bacteria. The polypeptide is Chloramphenicol acetyltransferase (cat) (Staphylococcus intermedius).